The chain runs to 174 residues: ATP synthase subunit b (174 aa).

A helical transmembrane segment spans residues 9–29 (LPNTSLIFWEVVTFLILLALL).

It belongs to the ATPase B chain family. In terms of assembly, F-type ATPases have 2 components, F(1) - the catalytic core - and F(0) - the membrane proton channel. F(1) has five subunits: alpha(3), beta(3), gamma(1), delta(1), epsilon(1). F(0) has three main subunits: a(1), b(2) and c(10-14). The alpha and beta chains form an alternating ring which encloses part of the gamma chain. F(1) is attached to F(0) by a central stalk formed by the gamma and epsilon chains, while a peripheral stalk is formed by the delta and b chains.

It localises to the cell membrane. Functionally, f(1)F(0) ATP synthase produces ATP from ADP in the presence of a proton or sodium gradient. F-type ATPases consist of two structural domains, F(1) containing the extramembraneous catalytic core and F(0) containing the membrane proton channel, linked together by a central stalk and a peripheral stalk. During catalysis, ATP synthesis in the catalytic domain of F(1) is coupled via a rotary mechanism of the central stalk subunits to proton translocation. Component of the F(0) channel, it forms part of the peripheral stalk, linking F(1) to F(0). The chain is ATP synthase subunit b from Rubrobacter xylanophilus (strain DSM 9941 / JCM 11954 / NBRC 16129 / PRD-1).